The sequence spans 454 residues: MDTPRVLLWAIFLISFLWDLPGFQQASISSSSSSSTELDSTKDVGNRKEGKMQRTPQESAEGRTPPEHGLRQKDLRRRPPGQHQGQEPPGRGLRVVPHEYMLSIYKTYSIAEKLGINASFFQSSKSANTITSFVDRGLDDLSHTPLRRQKYLFDVSTLSDKEELVGAELRLYRQAPPTPWGLPARPLHLQLFPCLSPLLLDARTLDPQGPTQAGWEVFDVWQGLRPQPWKQLCLELRAAWGELDAGDTGARARGPQQPPPLDLRSLGFGRRVRPPQERALLVVFTRSQRKNLFTEMHEQLGSAEAAGAEGSWPAPSGSPDAGSWLPSPGRRRRRTAFASRHGKRHGKKSRLRCSRKPLHVNFKELGWDDWIIAPLEYEAYHCEGVCDFPLRSHLEPTNHAIIQTLMNSMDPGSTPPSCCVPTKLTPISILYIDAGNNVVYKQYEDMVVESCGCR.

The first 22 residues, 1–22, serve as a signal peptide directing secretion; sequence MDTPRVLLWAIFLISFLWDLPG. A propeptide spanning residues 23 to 334 is cleaved from the precursor; the sequence is FQQASISSSS…LPSPGRRRRR (312 aa). The tract at residues 28–93 is disordered; it reads ISSSSSSSTE…QGQEPPGRGL (66 aa). Composition is skewed to basic and acidic residues over residues 39–52 and 60–73; these read DSTK…EGKM and AEGR…LRQK. Positions 81–92 are enriched in low complexity; the sequence is GQHQGQEPPGRG. Asn117 carries an N-linked (GlcNAc...) asparagine glycan. Disordered stretches follow at residues 247–268 and 303–350; these read DTGA…SLGF and AEAA…KKSR. A compositionally biased stretch (low complexity) spans 303 to 319; sequence AEAAGAEGSWPAPSGSP. The span at 329-350 shows a compositional bias: basic residues; it reads GRRRRRTAFASRHGKRHGKKSR. Intrachain disulfides connect Cys353–Cys419, Cys382–Cys451, and Cys386–Cys453.

The protein belongs to the TGF-beta family. Homodimer; disulfide-linked. As to expression, expressed in different subsets of developing joints. Highly expressed in the cochlea.

It localises to the secreted. Growth factor that controls proliferation and cellular differentiation in the retina and bone formation. Plays a key role in regulating apoptosis during retinal development. Establishes dorsal-ventral positional information in the retina and controls the formation of the retinotectal map. Required for normal formation of bones and joints in the limbs, skull, digits and axial skeleton. Plays a key role in establishing boundaries between skeletal elements during development. Regulation of GDF6 expression seems to be a mechanism for evolving species-specific changes in skeletal structures. Seems to positively regulate differentiation of chondrogenic tissue through the growth factor receptors subunits BMPR1A, BMPR1B, BMPR2 and ACVR2A, leading to the activation of SMAD1-SMAD5-SMAD8 complex. The regulation of chondrogenic differentiation is inhibited by NOG. Also involved in the induction of adipogenesis from mesenchymal stem cells. This mechanism acts through the growth factor receptors subunits BMPR1A, BMPR2 and ACVR2A and the activation of SMAD1-SMAD5-SMAD8 complex and MAPK14/p38. This Mus musculus (Mouse) protein is Growth/differentiation factor 6 (Gdf6).